The chain runs to 109 residues: Nucleoid-associated protein Ssed_2851 (109 aa).

It belongs to the YbaB/EbfC family. In terms of assembly, homodimer.

It localises to the cytoplasm. Its subcellular location is the nucleoid. Functionally, binds to DNA and alters its conformation. May be involved in regulation of gene expression, nucleoid organization and DNA protection. This Shewanella sediminis (strain HAW-EB3) protein is Nucleoid-associated protein Ssed_2851.